Here is a 143-residue protein sequence, read N- to C-terminus: Large ribosomal subunit protein uL13 (143 aa).

It belongs to the universal ribosomal protein uL13 family. As to quaternary structure, part of the 50S ribosomal subunit.

Its function is as follows. This protein is one of the early assembly proteins of the 50S ribosomal subunit, although it is not seen to bind rRNA by itself. It is important during the early stages of 50S assembly. In Dehalococcoides mccartyi (strain ATCC BAA-2266 / KCTC 15142 / 195) (Dehalococcoides ethenogenes (strain 195)), this protein is Large ribosomal subunit protein uL13.